Consider the following 573-residue polypeptide: uncharacterized protein (573 aa).

The region spanning 15–298 is the ABC transmembrane type-1 domain; the sequence is AGIALILMLT…FPFLIMIFTR (284 aa). The next 6 helical transmembrane spans lie at 17-37, 52-72, 127-147, 153-173, 238-258, and 275-295; these read IALI…LLIA, VWIW…AGML, IFMS…GIVL, VKLG…LLWV, FTMP…LWAG, and IINY…LIMI. An ABC transporter domain is found at 330 to 563; sequence IEFQHVSFRY…SQLYKRIYES (234 aa). 364–371 provides a ligand contact to ATP; the sequence is GATGSGKS.

The protein belongs to the ABC transporter superfamily.

It localises to the cell membrane. This is an uncharacterized protein from Bacillus subtilis (strain 168).